The chain runs to 658 residues: DNA mismatch repair protein MutL (658 aa).

Residues 114 to 130 (RQEDSSHATQVKAEDGK) are compositionally biased toward basic and acidic residues. Disordered regions lie at residues 114–137 (RQEDSSHATQVKAEDGKLSSPTAA) and 369–391 (DYPTGNKPDTRNAFGSSGKTAPM).

The protein belongs to the DNA mismatch repair MutL/HexB family.

This protein is involved in the repair of mismatches in DNA. It is required for dam-dependent methyl-directed DNA mismatch repair. May act as a 'molecular matchmaker', a protein that promotes the formation of a stable complex between two or more DNA-binding proteins in an ATP-dependent manner without itself being part of a final effector complex. This Neisseria meningitidis serogroup C (strain 053442) protein is DNA mismatch repair protein MutL.